Here is a 380-residue protein sequence, read N- to C-terminus: MSEIALEAWGEHEALLLKPPRSPLSIPPPKPRTAVLFPRREGFYTELGGYLPEVRLRFETYGTLSRRRDNAVLVFHALTGSAHLAGTYDEETFRSLSPLEQAFGREGWWDSLVGPGRILDPALYYVVSANHLGSCYGSTGPLSLDPRTGRPYGRDFPPLTIRDLARAQARLLDHLGVEKAIVIGGSLGGMVALEFALMYPERVKKLVVLAAPARHGPWARAFNHLSRQAILQDPEYQKGNPAPKGMALARGIAMMSYRAPEGFEARWGAEPELGETYLDYQGEKFLRRFHAESYLVLSRAMDTHDVGRGRGGVEEALKRLRAIPSLFVGIDTDLLYPAWEVRQAAKAAGARYREIKSPHGHDAFLIETDQVEEILDAFLP.

The region spanning 70-366 is the AB hydrolase-1 domain; the sequence is NAVLVFHALT…SPHGHDAFLI (297 aa). Serine 186 acts as the Nucleophile in catalysis. Arginine 250 is a binding site for substrate. Catalysis depends on residues aspartate 333 and histidine 361. Aspartate 362 contributes to the substrate binding site.

This sequence belongs to the AB hydrolase superfamily. MetX family. As to quaternary structure, homodimer.

The protein resides in the cytoplasm. The enzyme catalyses L-homoserine + acetyl-CoA = O-acetyl-L-homoserine + CoA. The protein operates within amino-acid biosynthesis; L-methionine biosynthesis via de novo pathway; O-acetyl-L-homoserine from L-homoserine: step 1/1. Transfers an acetyl group from acetyl-CoA to L-homoserine, forming acetyl-L-homoserine. The protein is Homoserine O-acetyltransferase of Thermus thermophilus (strain ATCC 27634 / DSM 579 / HB8).